Consider the following 116-residue polypeptide: Methionine-R-sulfoxide reductase B1 (116 aa).

A MsrB domain is found at 1-106; it reads MSFCSFFGGE…FSSSLKFIPK (106 aa). Zn(2+) contacts are provided by Cys23, Cys26, Cys71, and Cys74. Catalysis depends on Sec95, which acts as the Nucleophile. A non-standard amino acid (selenocysteine) is located at residue Sec95.

It belongs to the MsrB Met sulfoxide reductase family. The cofactor is Zn(2+). Post-translationally, truncated MSRB1/SEPX1 proteins produced by failed UGA/Sec decoding are ubiquitinated by the CRL2(FEM1C) E3 ubiquitin-protein ligase complex.

Its subcellular location is the cytoplasm. It is found in the nucleus. The protein resides in the cytoskeleton. The enzyme catalyses L-methionyl-[protein] + [thioredoxin]-disulfide + H2O = L-methionyl-(R)-S-oxide-[protein] + [thioredoxin]-dithiol. The catalysed reaction is [thioredoxin]-disulfide + L-methionine + H2O = L-methionine (R)-S-oxide + [thioredoxin]-dithiol. In terms of biological role, methionine-sulfoxide reductase that specifically reduces methionine (R)-sulfoxide back to methionine. While in many cases, methionine oxidation is the result of random oxidation following oxidative stress, methionine oxidation is also a post-translational modification that takes place on specific residue. Acts as a regulator of actin assembly by reducing methionine (R)-sulfoxide mediated by MICALs (MICAL1, MICAL2 or MICAL3) on actin, thereby promoting filament repolymerization. Plays a role in innate immunity by reducing oxidized actin, leading to actin repolymerization in macrophages. The polypeptide is Methionine-R-sulfoxide reductase B1 (MSRB1) (Bos taurus (Bovine)).